The sequence spans 247 residues: Triosephosphate isomerase (247 aa).

8–10 serves as a coordination point for substrate; it reads NWK. Catalysis depends on H95, which acts as the Electrophile. E162 serves as the catalytic Proton acceptor. Substrate-binding residues include G168 and S207.

Belongs to the triosephosphate isomerase family. In terms of assembly, homodimer.

It is found in the cytoplasm. The catalysed reaction is D-glyceraldehyde 3-phosphate = dihydroxyacetone phosphate. Its pathway is carbohydrate biosynthesis; gluconeogenesis. It functions in the pathway carbohydrate degradation; glycolysis; D-glyceraldehyde 3-phosphate from glycerone phosphate: step 1/1. In terms of biological role, involved in the gluconeogenesis. Catalyzes stereospecifically the conversion of dihydroxyacetone phosphate (DHAP) to D-glyceraldehyde-3-phosphate (G3P). This chain is Triosephosphate isomerase, found in Gluconacetobacter diazotrophicus (strain ATCC 49037 / DSM 5601 / CCUG 37298 / CIP 103539 / LMG 7603 / PAl5).